The following is an 89-amino-acid chain: Small ribosomal subunit protein uS15 (89 aa).

The protein belongs to the universal ribosomal protein uS15 family. In terms of assembly, part of the 30S ribosomal subunit. Forms a bridge to the 50S subunit in the 70S ribosome, contacting the 23S rRNA.

Functionally, one of the primary rRNA binding proteins, it binds directly to 16S rRNA where it helps nucleate assembly of the platform of the 30S subunit by binding and bridging several RNA helices of the 16S rRNA. Its function is as follows. Forms an intersubunit bridge (bridge B4) with the 23S rRNA of the 50S subunit in the ribosome. The sequence is that of Small ribosomal subunit protein uS15 from Sulfurovum sp. (strain NBC37-1).